The chain runs to 206 residues: Ribosomal RNA small subunit methyltransferase G (206 aa).

Residues glycine 73, leucine 78, 124–125 (VE), and arginine 139 each bind S-adenosyl-L-methionine.

This sequence belongs to the methyltransferase superfamily. RNA methyltransferase RsmG family.

The protein localises to the cytoplasm. The catalysed reaction is guanosine(527) in 16S rRNA + S-adenosyl-L-methionine = N(7)-methylguanosine(527) in 16S rRNA + S-adenosyl-L-homocysteine. Specifically methylates the N7 position of guanine in position 527 of 16S rRNA. The protein is Ribosomal RNA small subunit methyltransferase G of Yersinia pseudotuberculosis serotype O:1b (strain IP 31758).